A 149-amino-acid polypeptide reads, in one-letter code: Large ribosomal subunit protein bL9 (149 aa).

It belongs to the bacterial ribosomal protein bL9 family.

Functionally, binds to the 23S rRNA. The sequence is that of Large ribosomal subunit protein bL9 from Rubrobacter xylanophilus (strain DSM 9941 / JCM 11954 / NBRC 16129 / PRD-1).